The following is a 165-amino-acid chain: Sporulation thiol-disulfide oxidoreductase A (165 aa).

A signal peptide spans 1–26; sequence MLTKRLLTIYIMLLGLIAWFPGAAQA. One can recognise a Thioredoxin domain in the interval 27–165; sequence EEKQPAVPAV…AEQLKEWTEE (139 aa). Cys-65 and Cys-68 are oxidised to a cystine.

It belongs to the thioredoxin family.

Its subcellular location is the spore outer membrane. In terms of biological role, thiol-disulfide oxidoreductase with a reductive function, involved in spore cortex synthesis. It could be involved either in breaking disulfide bonds in cortex components or in proteins that are important for cortex synthesis, or in thiol/disulfide bond interchange. The polypeptide is Sporulation thiol-disulfide oxidoreductase A (stoA) (Bacillus subtilis (strain 168)).